Consider the following 105-residue polypeptide: MTSVDFSKGLVPTIILDDQNGDVLMLAYMNEESYQKTLETGYTWFFSRSRNELWNKGATSGHTQKVKQIWTDCDNDTLLIRVTQIGPACHTGKKSCFFNLIKEDF.

Aspartate 72 contributes to the Mg(2+) binding site. Zn(2+) is bound at residue cysteine 73. The Mg(2+) site is built by aspartate 74 and aspartate 76. Zn(2+) contacts are provided by cysteine 89 and cysteine 96.

Belongs to the PRA-CH family. In terms of assembly, homodimer. Mg(2+) serves as cofactor. Requires Zn(2+) as cofactor.

It is found in the cytoplasm. The catalysed reaction is 1-(5-phospho-beta-D-ribosyl)-5'-AMP + H2O = 1-(5-phospho-beta-D-ribosyl)-5-[(5-phospho-beta-D-ribosylamino)methylideneamino]imidazole-4-carboxamide. The protein operates within amino-acid biosynthesis; L-histidine biosynthesis; L-histidine from 5-phospho-alpha-D-ribose 1-diphosphate: step 3/9. In terms of biological role, catalyzes the hydrolysis of the adenine ring of phosphoribosyl-AMP. In Listeria monocytogenes serotype 4b (strain CLIP80459), this protein is Phosphoribosyl-AMP cyclohydrolase.